We begin with the raw amino-acid sequence, 71 residues long: Long neurotoxin 1 (71 aa).

5 cysteine pairs are disulfide-bonded: Cys3–Cys20, Cys14–Cys41, Cys26–Cys30, Cys45–Cys56, and Cys57–Cys62.

The protein belongs to the three-finger toxin family. Long-chain subfamily. Type II alpha-neurotoxin sub-subfamily. Expressed by the venom gland.

Its subcellular location is the secreted. Functionally, binds with high affinity to muscular (alpha-1/CHRNA1) and neuronal (alpha-7/CHRNA7) nicotinic acetylcholine receptor (nAChR) and inhibits acetylcholine from binding to the receptor, thereby impairing neuromuscular and neuronal transmission. The protein is Long neurotoxin 1 of Naja haje haje (Egyptian cobra).